The primary structure comprises 519 residues: MIPDVSHALTWLEAHPKALKGIRRGIERETLRVTADGQLASTGHPESLGAALTHQWITTDFAEALLEFITPVDGDIDHLLTFLRDIHRYTARKLGDERMWPLSMPCFIGAEQDIELAKYGSSNIGRFKTLYREGLKNRYGALMQTISGVHYNFSLPLEFWQAWAGVTDEKSGKEEISAGYFRLIRNYYRFGWVIPYLFGASPAICASFLQGRETALPFERNDKGMCYLPYATSLRLSDLGYTNKSQSNLGITFNDLHTYVAGLKRAIQTPSEEYAALGLKDGDRHLQLNTNVLQIENELYAPIRPKRVTRAGESPSDALLRGGIEYIEVRSLDINPFSPIGVDAVQARFLDLFLIWCVLADAPEMSSDELLCTRKNWNRVILEGRKPGQTIGMGCNDTREPLEKVGKDLFTDLRRVAEVLDGKDSTEYQQVCDELVASFDDPSLTFSARILQAMKEGGIGGVGLELAERYREMLQNEPLELLTEEQLSEEGAASWVRQRELELKDKLSFEEYLALHGGQ.

The protein belongs to the glutamate--cysteine ligase type 1 family. Type 1 subfamily.

It catalyses the reaction L-cysteine + L-glutamate + ATP = gamma-L-glutamyl-L-cysteine + ADP + phosphate + H(+). The protein operates within sulfur metabolism; glutathione biosynthesis; glutathione from L-cysteine and L-glutamate: step 1/2. This Yersinia enterocolitica serotype O:8 / biotype 1B (strain NCTC 13174 / 8081) protein is Glutamate--cysteine ligase.